A 270-amino-acid chain; its full sequence is 3-methyl-2-oxobutanoate hydroxymethyltransferase (270 aa).

Residues Asp-43 and Asp-82 each coordinate Mg(2+). 3-methyl-2-oxobutanoate is bound by residues Asp-43 to Ser-44, Asp-82, and Lys-112. Glu-114 contacts Mg(2+). Glu-179 functions as the Proton acceptor in the catalytic mechanism.

It belongs to the PanB family. As to quaternary structure, homodecamer; pentamer of dimers. Mg(2+) serves as cofactor.

The protein localises to the cytoplasm. It carries out the reaction 3-methyl-2-oxobutanoate + (6R)-5,10-methylene-5,6,7,8-tetrahydrofolate + H2O = 2-dehydropantoate + (6S)-5,6,7,8-tetrahydrofolate. It functions in the pathway cofactor biosynthesis; (R)-pantothenate biosynthesis; (R)-pantoate from 3-methyl-2-oxobutanoate: step 1/2. Catalyzes the reversible reaction in which hydroxymethyl group from 5,10-methylenetetrahydrofolate is transferred onto alpha-ketoisovalerate to form ketopantoate. This is 3-methyl-2-oxobutanoate hydroxymethyltransferase from Staphylococcus carnosus (strain TM300).